A 501-amino-acid polypeptide reads, in one-letter code: Probable cytosol aminopeptidase (501 aa).

Residues Lys268 and Asp273 each coordinate Mn(2+). Lys280 is an active-site residue. The Mn(2+) site is built by Asp291, Asp350, and Glu352. The active site involves Arg354.

This sequence belongs to the peptidase M17 family. Requires Mn(2+) as cofactor.

Its subcellular location is the cytoplasm. It catalyses the reaction Release of an N-terminal amino acid, Xaa-|-Yaa-, in which Xaa is preferably Leu, but may be other amino acids including Pro although not Arg or Lys, and Yaa may be Pro. Amino acid amides and methyl esters are also readily hydrolyzed, but rates on arylamides are exceedingly low.. The enzyme catalyses Release of an N-terminal amino acid, preferentially leucine, but not glutamic or aspartic acids.. Its function is as follows. Presumably involved in the processing and regular turnover of intracellular proteins. Catalyzes the removal of unsubstituted N-terminal amino acids from various peptides. This is Probable cytosol aminopeptidase from Idiomarina loihiensis (strain ATCC BAA-735 / DSM 15497 / L2-TR).